The sequence spans 78 residues: MRLILWLPVLVVVLLMVTEGPAPAQGAPDVASTFRNIPNSLKEFGNNLKDTFESIPEATRKLMTSFAERLKNFRIPLL.

The N-terminal stretch at Met1–Gly26 is a signal peptide.

It belongs to the apolipoprotein C1 family.

Its subcellular location is the secreted. Inhibitor of lipoprotein binding to the low density lipoprotein (LDL) receptor, LDL receptor-related protein, and very low density lipoprotein (VLDL) receptor. Associates with high density lipoproteins (HDL) and the triacylglycerol-rich lipoproteins in the plasma and makes up about 10% of the protein of the VLDL and 2% of that of HDL. Appears to interfere directly with fatty acid uptake and is also the major plasma inhibitor of cholesteryl ester transfer protein (CETP). Binds free fatty acids and reduces their intracellular esterification. Modulates the interaction of APOE with beta-migrating VLDL and inhibits binding of beta-VLDL to the LDL receptor-related protein. The protein is Apolipoprotein C-I (APOC1) of Panthera tigris altaica (Siberian tiger).